The following is a 391-amino-acid chain: Methylthioribose-1-phosphate isomerase (391 aa).

The Proton donor role is filled by Asp267.

Belongs to the eIF-2B alpha/beta/delta subunits family. MtnA subfamily.

The protein resides in the cytoplasm. Its subcellular location is the nucleus. The enzyme catalyses 5-(methylsulfanyl)-alpha-D-ribose 1-phosphate = 5-(methylsulfanyl)-D-ribulose 1-phosphate. The protein operates within amino-acid biosynthesis; L-methionine biosynthesis via salvage pathway; L-methionine from S-methyl-5-thio-alpha-D-ribose 1-phosphate: step 1/6. Its function is as follows. Catalyzes the interconversion of methylthioribose-1-phosphate (MTR-1-P) into methylthioribulose-1-phosphate (MTRu-1-P). The chain is Methylthioribose-1-phosphate isomerase from Ajellomyces capsulatus (strain NAm1 / WU24) (Darling's disease fungus).